Here is a 342-residue protein sequence, read N- to C-terminus: Probable dual-specificity RNA methyltransferase RlmN (342 aa).

The Proton acceptor role is filled by Glu91. Residues 97-326 form the Radical SAM core domain; it reads YRFGNTACVS…CTVRRELGSD (230 aa). Cys104 and Cys331 are oxidised to a cystine. [4Fe-4S] cluster contacts are provided by Cys111, Cys115, and Cys118. S-adenosyl-L-methionine-binding positions include 157–158, Ser189, 212–214, and Asn288; these read GE and SLH. Cys331 (S-methylcysteine intermediate) is an active-site residue.

Belongs to the radical SAM superfamily. RlmN family. It depends on [4Fe-4S] cluster as a cofactor.

The protein resides in the cytoplasm. It catalyses the reaction adenosine(2503) in 23S rRNA + 2 reduced [2Fe-2S]-[ferredoxin] + 2 S-adenosyl-L-methionine = 2-methyladenosine(2503) in 23S rRNA + 5'-deoxyadenosine + L-methionine + 2 oxidized [2Fe-2S]-[ferredoxin] + S-adenosyl-L-homocysteine. It carries out the reaction adenosine(37) in tRNA + 2 reduced [2Fe-2S]-[ferredoxin] + 2 S-adenosyl-L-methionine = 2-methyladenosine(37) in tRNA + 5'-deoxyadenosine + L-methionine + 2 oxidized [2Fe-2S]-[ferredoxin] + S-adenosyl-L-homocysteine. In terms of biological role, specifically methylates position 2 of adenine 2503 in 23S rRNA and position 2 of adenine 37 in tRNAs. This Thermoanaerobacter pseudethanolicus (strain ATCC 33223 / 39E) (Clostridium thermohydrosulfuricum) protein is Probable dual-specificity RNA methyltransferase RlmN.